A 104-amino-acid polypeptide reads, in one-letter code: MAKIVSGDDVIVITGSDKGKVGKVVKILRKGGRVLAKVASVALCRKSVKPSKNREGGIFSIERFIDISNVAFFDSEAGVRTRVGYKFVDGKKVRYLKSSGRVLD.

Belongs to the universal ribosomal protein uL24 family. In terms of assembly, part of the 50S ribosomal subunit.

In terms of biological role, one of two assembly initiator proteins, it binds directly to the 5'-end of the 23S rRNA, where it nucleates assembly of the 50S subunit. Functionally, one of the proteins that surrounds the polypeptide exit tunnel on the outside of the subunit. In Anaplasma phagocytophilum (strain HZ), this protein is Large ribosomal subunit protein uL24.